The chain runs to 694 residues: Elongation factor G (694 aa).

A tr-type G domain is found at 8–284; that stretch reads EKLRNIGIVA…AVIDFLPSPV (277 aa). GTP contacts are provided by residues 17–24, 81–85, and 135–138; these read AHIDAGKT, DTPGH, and NKMD.

Belongs to the TRAFAC class translation factor GTPase superfamily. Classic translation factor GTPase family. EF-G/EF-2 subfamily.

The protein localises to the cytoplasm. Catalyzes the GTP-dependent ribosomal translocation step during translation elongation. During this step, the ribosome changes from the pre-translocational (PRE) to the post-translocational (POST) state as the newly formed A-site-bound peptidyl-tRNA and P-site-bound deacylated tRNA move to the P and E sites, respectively. Catalyzes the coordinated movement of the two tRNA molecules, the mRNA and conformational changes in the ribosome. The protein is Elongation factor G of Persephonella marina (strain DSM 14350 / EX-H1).